Here is a 147-residue protein sequence, read N- to C-terminus: Ponticulin-like protein C5 (147 aa).

The N-terminal stretch at 1-20 (MKLNNSLLLLIVAIIASSNA) is a signal peptide. Asn-118 carries GPI-like-anchor amidated asparagine lipidation. The N-linked (GlcNAc...) asparagine glycan is linked to Asn-118. A propeptide spans 119–147 (SSESDSSDSTRIGASFALFALALLSMLAL) (removed in mature form).

It belongs to the ponticulin family. The GPI-like-anchor contains a phosphoceramide group, rather than a phosphatidyl group.

The protein localises to the cell membrane. This Dictyostelium discoideum (Social amoeba) protein is Ponticulin-like protein C5 (ponC5).